Consider the following 113-residue polypeptide: uncharacterized protein (113 aa).

A mitochondrion-targeting transit peptide spans 1-14 (MATRNALRIVSRRF). A disordered region spans residues 41 to 79 (QKLARQGPGEQAAGSASEAKVAGATASASAESGPKVSED). Over residues 55–73 (SASEAKVAGATASASAESG) the composition is skewed to low complexity.

The protein resides in the mitochondrion. This is an uncharacterized protein from Arabidopsis thaliana (Mouse-ear cress).